We begin with the raw amino-acid sequence, 95 residues long: Large ribosomal subunit protein bL25 (95 aa).

The protein belongs to the bacterial ribosomal protein bL25 family. Part of the 50S ribosomal subunit; part of the 5S rRNA/L5/L18/L25 subcomplex. Contacts the 5S rRNA. Binds to the 5S rRNA independently of L5 and L18.

This is one of the proteins that binds to the 5S RNA in the ribosome where it forms part of the central protuberance. In Actinobacillus pleuropneumoniae serotype 3 (strain JL03), this protein is Large ribosomal subunit protein bL25.